A 157-amino-acid chain; its full sequence is Thioredoxin 2 (157 aa).

Positions 1–23 (MKKYIFFFLFSFINFFFVYDVTC) are cleaved as a signal peptide. One can recognise a Thioredoxin domain in the interval 46–157 (LRMFKKVPRL…DLIALIKKHL (112 aa)). Catalysis depends on nucleophile residues cysteine 82 and cysteine 85. A disulfide bond links cysteine 82 and cysteine 85.

The protein belongs to the thioredoxin family. As to quaternary structure, monomer. Component of the Plasmodium translocon of exported proteins (PTEX) complex composed of HSP101, EXP2, PTEX150, PTEX88 and TRX2. Post-translationally, the disulfide bond between Cys-82 and Cys-85 acts as a redox-active center and is reduced by thioredoxin reductase TRXR.

The protein resides in the parasitophorous vacuole membrane. Its function is as follows. Participates in various redox reactions through the reversible oxidation of its active center dithiol to a disulfide and catalyzes dithiol-disulfide exchange reactions. As part of the translocon PTEX complex, plays a role in the export of parasite proteins into the host erythrocyte. The translocon PTEX complex is a multi-protein machinery resident in the parasite parasitophorous vacuolar membrane, responsible for protein secretion into host cells. May contribute to the unfolding of proteins containing the PEXEL localization motif before their passage through the translocon or regulate the PTEX complex function. This Plasmodium falciparum (isolate 3D7) protein is Thioredoxin 2.